The chain runs to 1093 residues: Error-prone DNA polymerase (1093 aa).

The disordered stretch occupies residues methionine 1–serine 55. Over residues glutamate 12–glycine 25 the composition is skewed to basic and acidic residues.

Belongs to the DNA polymerase type-C family. DnaE2 subfamily.

The protein localises to the cytoplasm. The catalysed reaction is DNA(n) + a 2'-deoxyribonucleoside 5'-triphosphate = DNA(n+1) + diphosphate. In terms of biological role, DNA polymerase involved in damage-induced mutagenesis and translesion synthesis (TLS). It is not the major replicative DNA polymerase. This chain is Error-prone DNA polymerase, found in Mycolicibacterium paratuberculosis (strain ATCC BAA-968 / K-10) (Mycobacterium paratuberculosis).